The chain runs to 367 residues: MKVKVLSLLVPALLVAGAANAAEVYNKDGNKLDLYGKVDGLHYFSDDKSVDGDQTYMRLGFKGETQVTDQLTGYGQWEYQIQGNSAENENNSWTRVAFAGLKFQDVGSFDYGRNYGVVYDVTSWTDVLPEFGGDTYGSDNFMQQRGNGFATYRNTDFFGLVDGLNFAVQYQGKNGSVSGEGMTNNGREALRQNGDGVGGSITYDYEGFGIGAAVSSSKRTDDQNSPLYIGNGDRAETYTGGLKYDANNIYLAAQYTQTYNATRVGSLGWANKAQNFEAVAQYQFDFGLRPSLAYLQSKGKNLGVINGRNYDDEDILKYVDVGATYYFNKNMSTYVDYKINLLDDNQFTRDAGINTDNIVALGLVYQF.

Positions 1 to 21 (MKVKVLSLLVPALLVAGAANA) are cleaved as a signal peptide.

The protein belongs to the Gram-negative porin family. As to quaternary structure, homotrimer.

The protein resides in the cell outer membrane. Its function is as follows. Forms pores that allow passive diffusion of small molecules across the outer membrane. This is Outer membrane porin C (ompC) from Escherichia coli O157:H7.